The sequence spans 581 residues: Proline--tRNA ligase (581 aa).

The protein belongs to the class-II aminoacyl-tRNA synthetase family. ProS type 1 subfamily. In terms of assembly, homodimer.

It is found in the cytoplasm. It carries out the reaction tRNA(Pro) + L-proline + ATP = L-prolyl-tRNA(Pro) + AMP + diphosphate. In terms of biological role, catalyzes the attachment of proline to tRNA(Pro) in a two-step reaction: proline is first activated by ATP to form Pro-AMP and then transferred to the acceptor end of tRNA(Pro). As ProRS can inadvertently accommodate and process non-cognate amino acids such as alanine and cysteine, to avoid such errors it has two additional distinct editing activities against alanine. One activity is designated as 'pretransfer' editing and involves the tRNA(Pro)-independent hydrolysis of activated Ala-AMP. The other activity is designated 'posttransfer' editing and involves deacylation of mischarged Ala-tRNA(Pro). The misacylated Cys-tRNA(Pro) is not edited by ProRS. The chain is Proline--tRNA ligase from Chlamydia trachomatis serovar A (strain ATCC VR-571B / DSM 19440 / HAR-13).